Consider the following 150-residue polypeptide: 1,4-dihydroxy-2-naphthoyl-CoA hydrolase (150 aa).

D19 is an active-site residue.

The protein belongs to the 4-hydroxybenzoyl-CoA thioesterase family. DHNA-CoA hydrolase subfamily.

The enzyme catalyses 1,4-dihydroxy-2-naphthoyl-CoA + H2O = 1,4-dihydroxy-2-naphthoate + CoA + H(+). Its pathway is cofactor biosynthesis; phylloquinone biosynthesis. It functions in the pathway quinol/quinone metabolism; 1,4-dihydroxy-2-naphthoate biosynthesis; 1,4-dihydroxy-2-naphthoate from chorismate: step 7/7. Functionally, catalyzes the hydrolysis of 1,4-dihydroxy-2-naphthoyl-CoA (DHNA-CoA) to 1,4-dihydroxy-2-naphthoate (DHNA), a reaction involved in phylloquinone (vitamin K1) biosynthesis. This chain is 1,4-dihydroxy-2-naphthoyl-CoA hydrolase, found in Prochlorococcus marinus (strain AS9601).